The primary structure comprises 309 residues: Protein FdhE (309 aa).

This sequence belongs to the FdhE family.

It localises to the cytoplasm. Its function is as follows. Necessary for formate dehydrogenase activity. The polypeptide is Protein FdhE (Salmonella choleraesuis (strain SC-B67)).